Consider the following 302-residue polypeptide: NAD kinase 2 (302 aa).

Catalysis depends on aspartate 78, which acts as the Proton acceptor. NAD(+)-binding positions include 78–79 (DG), 152–153 (NE), aspartate 182, 193–198 (TAYALS), and alanine 217.

This sequence belongs to the NAD kinase family. Requires a divalent metal cation as cofactor.

The protein resides in the cytoplasm. The enzyme catalyses NAD(+) + ATP = ADP + NADP(+) + H(+). Involved in the regulation of the intracellular balance of NAD and NADP, and is a key enzyme in the biosynthesis of NADP. Catalyzes specifically the phosphorylation on 2'-hydroxyl of the adenosine moiety of NAD to yield NADP. The polypeptide is NAD kinase 2 (Parasynechococcus marenigrum (strain WH8102)).